We begin with the raw amino-acid sequence, 1140 residues long: Centrosomal protein of 135 kDa (1140 aa).

The interval 11–64 (NIRKRLDQLGYRQTLTVECLPLVEKLFSDLVHTTESLRQSKLSAVKAEKESANF) is homodimerization. Coiled-coil stretches lie at residues 75–151 (NARL…KNLH) and 199–416 (LQVA…FAVT). 2 positions are modified to phosphoserine: serine 383 and serine 439. 3 coiled-coil regions span residues 447–644 (LKGI…LENK), 668–1036 (SLRI…LESL), and 1079–1113 (NTMLRAKVAQLQTDYDALKRQISTERYERERAIQE). At serine 688 the chain carries Phosphoserine. A disordered region spans residues 1114 to 1140 (MRRHGLATPPLSSTLRSPSHSPEHRNV). Threonine 1121 is subject to Phosphothreonine. The span at 1121–1133 (TPPLSSTLRSPSH) shows a compositional bias: low complexity. Serine 1130 bears the Phosphoserine mark.

Belongs to the CEP135/TSGA10 family. Homodimer. Interacts with DCTN2. Interacts with CEP250.

It is found in the cytoplasm. Its subcellular location is the cytoskeleton. It localises to the microtubule organizing center. The protein resides in the centrosome. The protein localises to the centriole. In terms of biological role, centrosomal microtubule-binding protein involved in centriole biogenesis. Acts as a scaffolding protein during early centriole biogenesis. Required for the targeting of centriole satellite proteins to centrosomes such as of PCM1, SSX2IP and CEP290 and recruitment of WRAP73 to centrioles. Also required for centriole-centriole cohesion during interphase by acting as a platform protein for CEP250 at the centriole. Required for the recruitment of CEP295 to the proximal end of new-born centrioles at the centriolar microtubule wall during early S phase in a PLK4-dependent manner. The polypeptide is Centrosomal protein of 135 kDa (Homo sapiens (Human)).